A 249-amino-acid polypeptide reads, in one-letter code: Aspartate/glutamate leucyltransferase (249 aa).

Belongs to the R-transferase family. Bpt subfamily.

The protein resides in the cytoplasm. The catalysed reaction is N-terminal L-glutamyl-[protein] + L-leucyl-tRNA(Leu) = N-terminal L-leucyl-L-glutamyl-[protein] + tRNA(Leu) + H(+). It catalyses the reaction N-terminal L-aspartyl-[protein] + L-leucyl-tRNA(Leu) = N-terminal L-leucyl-L-aspartyl-[protein] + tRNA(Leu) + H(+). Functions in the N-end rule pathway of protein degradation where it conjugates Leu from its aminoacyl-tRNA to the N-termini of proteins containing an N-terminal aspartate or glutamate. This is Aspartate/glutamate leucyltransferase from Brucella melitensis biotype 2 (strain ATCC 23457).